The chain runs to 240 residues: Ribonuclease HII (240 aa).

An RNase H type-2 domain is found at 33-222 (GPVAGVDEVG…VRRIVTRSNT (190 aa)). Positions 39, 40, and 131 each coordinate a divalent metal cation.

Belongs to the RNase HII family. Mn(2+) is required as a cofactor. It depends on Mg(2+) as a cofactor.

The protein resides in the cytoplasm. The enzyme catalyses Endonucleolytic cleavage to 5'-phosphomonoester.. In terms of biological role, endonuclease that specifically degrades the RNA of RNA-DNA hybrids. The polypeptide is Ribonuclease HII (Mycobacterium leprae (strain Br4923)).